A 326-amino-acid polypeptide reads, in one-letter code: Nucleoporin Nup37 (326 aa).

WD repeat units lie at residues 70–117 (HHGV…KNEY), 122–162 (GHSD…TAHF), 164–203 (LHSP…AILS), and 294–325 (GSVA…WVTE).

Component of the Nup107-160 subcomplex of the nuclear pore complex (NPC). The Nup107-160 subcomplex includes NUP160, NUP133, NUP107, NUP98, NUP85, NUP43, NUP37, SEH1 and SEC13.

The protein localises to the chromosome. It is found in the centromere. The protein resides in the kinetochore. Its subcellular location is the nucleus. It localises to the nuclear pore complex. Functionally, component of the Nup107-160 subcomplex of the nuclear pore complex (NPC). The Nup107-160 subcomplex is required for the assembly of a functional NPC. The Nup107-160 subcomplex is also required for normal kinetochore microtubule attachment, mitotic progression and chromosome segregation. This Mus musculus (Mouse) protein is Nucleoporin Nup37 (Nup37).